Consider the following 75-residue polypeptide: Small ribosomal subunit protein bS18 (75 aa).

It belongs to the bacterial ribosomal protein bS18 family. Part of the 30S ribosomal subunit. Forms a tight heterodimer with protein bS6.

In terms of biological role, binds as a heterodimer with protein bS6 to the central domain of the 16S rRNA, where it helps stabilize the platform of the 30S subunit. The chain is Small ribosomal subunit protein bS18 from Sodalis glossinidius (strain morsitans).